Consider the following 497-residue polypeptide: UDP-N-acetylmuramoyl-L-alanyl-D-glutamate--2,6-diaminopimelate ligase (497 aa).

Serine 33 contributes to the UDP-N-acetyl-alpha-D-muramoyl-L-alanyl-D-glutamate binding site. 119–125 (GTNGKTT) contacts ATP. Residues 161-162 (TT), serine 188, glutamine 194, and arginine 196 contribute to the UDP-N-acetyl-alpha-D-muramoyl-L-alanyl-D-glutamate site. At lysine 228 the chain carries N6-carboxylysine. Residues arginine 390, 414-417 (DNPR), glycine 465, and glutamate 469 contribute to the meso-2,6-diaminopimelate site. The short motif at 414–417 (DNPR) is the Meso-diaminopimelate recognition motif element.

This sequence belongs to the MurCDEF family. MurE subfamily. Mg(2+) serves as cofactor. Post-translationally, carboxylation is probably crucial for Mg(2+) binding and, consequently, for the gamma-phosphate positioning of ATP.

It localises to the cytoplasm. The catalysed reaction is UDP-N-acetyl-alpha-D-muramoyl-L-alanyl-D-glutamate + meso-2,6-diaminopimelate + ATP = UDP-N-acetyl-alpha-D-muramoyl-L-alanyl-gamma-D-glutamyl-meso-2,6-diaminopimelate + ADP + phosphate + H(+). The protein operates within cell wall biogenesis; peptidoglycan biosynthesis. Catalyzes the addition of meso-diaminopimelic acid to the nucleotide precursor UDP-N-acetylmuramoyl-L-alanyl-D-glutamate (UMAG) in the biosynthesis of bacterial cell-wall peptidoglycan. This chain is UDP-N-acetylmuramoyl-L-alanyl-D-glutamate--2,6-diaminopimelate ligase, found in Synechococcus elongatus (strain ATCC 33912 / PCC 7942 / FACHB-805) (Anacystis nidulans R2).